Here is a 406-residue protein sequence, read N- to C-terminus: Argininosuccinate synthase (406 aa).

ATP-binding positions include 10–18 and Ala37; that span reads AYSGGLDTS. L-citrulline is bound by residues Tyr88 and Ser93. Gly118 is a binding site for ATP. The L-aspartate site is built by Thr120, Asn124, and Asp125. Asn124 serves as a coordination point for L-citrulline. L-citrulline is bound by residues Arg128, Ser180, Ser189, Glu265, and Tyr277.

Belongs to the argininosuccinate synthase family. Type 1 subfamily. In terms of assembly, homotetramer.

It localises to the cytoplasm. It catalyses the reaction L-citrulline + L-aspartate + ATP = 2-(N(omega)-L-arginino)succinate + AMP + diphosphate + H(+). The protein operates within amino-acid biosynthesis; L-arginine biosynthesis; L-arginine from L-ornithine and carbamoyl phosphate: step 2/3. The chain is Argininosuccinate synthase from Methylobacillus flagellatus (strain ATCC 51484 / DSM 6875 / VKM B-1610 / KT).